The sequence spans 332 residues: L-lactate dehydrogenase A chain (332 aa).

An N-acetylalanine modification is found at alanine 2. Lysine 5 is modified (N6-acetyllysine; alternate). Residue lysine 5 is modified to N6-succinyllysine; alternate. Lysine 14 bears the N6-acetyllysine mark. The residue at position 18 (threonine 18) is a Phosphothreonine. 29–57 contacts NAD(+); that stretch reads GAVGMACAISILMKDLADELALVDVIEDK. Position 57 is an N6-acetyllysine; alternate (lysine 57). Lysine 57 participates in a covalent cross-link: Glycyl lysine isopeptide (Lys-Gly) (interchain with G-Cter in SUMO2); alternate. Residue lysine 81 is modified to N6-acetyllysine. NAD(+) is bound at residue arginine 99. Substrate is bound at residue arginine 106. Lysine 118 is modified (N6-acetyllysine; alternate). An N6-succinyllysine; alternate modification is found at lysine 118. An N6-acetyllysine modification is found at lysine 126. Asparagine 138 is a binding site for NAD(+). Substrate contacts are provided by asparagine 138 and arginine 169. Histidine 193 serves as the catalytic Proton acceptor. N6-acetyllysine is present on residues lysine 224 and lysine 232. Tyrosine 239 is modified (phosphotyrosine). Lysine 243 is subject to N6-acetyllysine. Threonine 248 is a substrate binding site. At threonine 309 the chain carries Phosphothreonine. Lysine 318 carries the N6-acetyllysine; alternate modification. Lysine 318 carries the post-translational modification N6-succinyllysine; alternate. A Phosphothreonine modification is found at threonine 322.

Belongs to the LDH/MDH superfamily. LDH family. Homotetramer. Interacts with PTEN upstream reading frame protein MP31. Post-translationally, ISGylated.

The protein localises to the cytoplasm. The enzyme catalyses (S)-lactate + NAD(+) = pyruvate + NADH + H(+). Its pathway is fermentation; pyruvate fermentation to lactate; (S)-lactate from pyruvate: step 1/1. Its function is as follows. Interconverts simultaneously and stereospecifically pyruvate and lactate with concomitant interconversion of NADH and NAD(+). The protein is L-lactate dehydrogenase A chain (LDHA) of Macaca fascicularis (Crab-eating macaque).